We begin with the raw amino-acid sequence, 750 residues long: Photosystem I P700 chlorophyll a apoprotein A1 (750 aa).

Transmembrane regions (helical) follow at residues 70-93 (VFSA…FHGA), 156-179 (LYCT…FHYH), 195-219 (LNHH…HVSL), 291-309 (IAHH…GHMY), 346-369 (WHAQ…HHMY), 385-411 (LSLF…IFMV), 433-455 (AIIS…LYIH), and 531-549 (FLVH…LILL). [4Fe-4S] cluster-binding residues include Cys-573 and Cys-582. Helical transmembrane passes span 589–610 (HVFL…HFSW) and 664–686 (LSAY…MFLF). A chlorophyll a'-binding site is contributed by His-675. Chlorophyll a contacts are provided by Met-683 and Tyr-691. Trp-692 is a phylloquinone binding site. The chain crosses the membrane as a helical span at residues 724-744 (AVGVTHYLLGGIATTWAFFLA).

This sequence belongs to the PsaA/PsaB family. The PsaA/B heterodimer binds the P700 chlorophyll special pair and subsequent electron acceptors. PSI consists of a core antenna complex that captures photons, and an electron transfer chain that converts photonic excitation into a charge separation. The eukaryotic PSI reaction center is composed of at least 11 subunits. It depends on P700 is a chlorophyll a/chlorophyll a' dimer, A0 is one or more chlorophyll a, A1 is one or both phylloquinones and FX is a shared 4Fe-4S iron-sulfur center. as a cofactor.

Its subcellular location is the plastid. The protein localises to the chloroplast thylakoid membrane. The catalysed reaction is reduced [plastocyanin] + hnu + oxidized [2Fe-2S]-[ferredoxin] = oxidized [plastocyanin] + reduced [2Fe-2S]-[ferredoxin]. Functionally, psaA and PsaB bind P700, the primary electron donor of photosystem I (PSI), as well as the electron acceptors A0, A1 and FX. PSI is a plastocyanin-ferredoxin oxidoreductase, converting photonic excitation into a charge separation, which transfers an electron from the donor P700 chlorophyll pair to the spectroscopically characterized acceptors A0, A1, FX, FA and FB in turn. Oxidized P700 is reduced on the lumenal side of the thylakoid membrane by plastocyanin. This Triticum aestivum (Wheat) protein is Photosystem I P700 chlorophyll a apoprotein A1.